Reading from the N-terminus, the 565-residue chain is MAQRIFTLILLLCSTSVFAGLFDAPGRSQFVPADQAFAFDFQQNQHDLNLTWQIKDGYYLYRKQIRITPEHAKIADVQLPQGVWHEDEFYGKSEIYRDRLTLPVTINQASAGATLTVTYQGCADAGFCYPPETKTVPLSEVVANNAASQPVSVSQQEQHTAQLPFSALWALLIGIGIAFTPCVLPMYPLISGIVLGGKQRLSTARALLLTFIYVQGMALTYTALGLVVAAAGLQFQAALQHPYVLIGLAIVFTLLAMSMFGLFTLQLPSSLQTRLTLMSNRQQGGSPGGVFVMGAIAGLICSPCTTAPLSAILLYIAQSGNMWLGGGTLYLYALGMGLPLMLITVFGNRLLPKSGPWMEQVKTAFGFVILALPVFLLERVIGDVWGLRLWSALGVAFFGWAFITSLQAKRGWMRVVQIILLAAALVSVRPLQDWAFGATHTAQTQTHLNFTQIKTVDELNQALVEAKGKPVMLDLYADWCVACKEFEKYTFSDPQVQKALADTVLLQANVTANDAQDVALLKHLNVLGLPTILFFDGQGQEHPQARVTGFMDAETFSAHLRDRQP.

The signal sequence occupies residues Met-1–Ala-19. 2 cysteine pairs are disulfide-bonded: Cys-122–Cys-128 and Cys-182–Cys-304. 7 helical membrane-spanning segments follow: residues Leu-163–Val-183, Leu-208–Val-228, Tyr-243–Phe-263, Ile-296–Ile-316, Trp-323–Ile-343, Trp-357–Leu-377, and Val-384–Thr-404. The Thioredoxin domain occupies Trp-434–Pro-565. Cys-480 and Cys-483 are disulfide-bonded.

The protein belongs to the thioredoxin family. DsbD subfamily.

The protein resides in the cell inner membrane. The enzyme catalyses [protein]-dithiol + NAD(+) = [protein]-disulfide + NADH + H(+). It carries out the reaction [protein]-dithiol + NADP(+) = [protein]-disulfide + NADPH + H(+). Its function is as follows. Required to facilitate the formation of correct disulfide bonds in some periplasmic proteins and for the assembly of the periplasmic c-type cytochromes. Acts by transferring electrons from cytoplasmic thioredoxin to the periplasm. This transfer involves a cascade of disulfide bond formation and reduction steps. The chain is Thiol:disulfide interchange protein DsbD from Shigella flexneri serotype 5b (strain 8401).